A 60-amino-acid polypeptide reads, in one-letter code: Hemocyte defensin Cg-Defh1 (60 aa).

The N-terminal stretch at 1–17 (LFTLVVLLMVSADMAFA) is a signal peptide. Residues Phe-19, Gly-20, and Cys-21 each contribute to the beta-D-GlcNAc-(1-&gt;4)-Mur2Ac(oyl-L-Ala-gamma-D-Glu-L-Lys-D-Ala-D-Ala)-di-trans,octa-cis-undecaprenyl diphosphate site. Cystine bridges form between Cys-21–Cys-42, Cys-28–Cys-51, Cys-32–Cys-53, and Cys-37–Cys-56. The tract at residues 22-25 (PRDQ) is binds to membrane interface. His-31 contacts beta-D-GlcNAc-(1-&gt;4)-Mur2Ac(oyl-L-Ala-gamma-D-Glu-L-Lys-D-Ala-D-Ala)-di-trans,octa-cis-undecaprenyl diphosphate. The binds to membrane interface stretch occupies residues 43 to 49 (DAVTLWL). Cys-51 serves as a coordination point for beta-D-GlcNAc-(1-&gt;4)-Mur2Ac(oyl-L-Ala-gamma-D-Glu-L-Lys-D-Ala-D-Ala)-di-trans,octa-cis-undecaprenyl diphosphate.

This sequence belongs to the invertebrate defensin family. As to expression, expressed in hemocytes.

The protein resides in the secreted. The protein localises to the target cell membrane. In terms of biological role, antibacterial peptide mostly active against Gram-positive bacteria. It acts by selectively inhibiting peptidoglycan biosynthesis through complex formation with the cell wall precursor lipid II (1:1 molar ratio) thus inhibiting cell wall synthesis. It does not disrupt cell membranes. Is noticeably less potent than Cg-Defh2 and Cg-Defm. Shows no or limited activities against Gram-negative bacteria. The protein is Hemocyte defensin Cg-Defh1 of Magallana gigas (Pacific oyster).